Here is a 744-residue protein sequence, read N- to C-terminus: NADH-ubiquinone oxidoreductase 78 kDa subunit, mitochondrial (744 aa).

Polar residues predominate over residues 1 to 10 (MLRSTLSRSA). Residues 1–26 (MLRSTLSRSAWRTGRHQAARNASRAF) are disordered. The N-terminal 33 residues, 1–33 (MLRSTLSRSAWRTGRHQAARNASRAFSATAQRP), are a transit peptide targeting the mitochondrion. The 79-residue stretch at 34–112 (AEVELTIDGK…GMVVKTNSPL (79 aa)) folds into the 2Fe-2S ferredoxin-type domain. C68, C79, C82, and C96 together coordinate [2Fe-2S] cluster. The 4Fe-4S His(Cys)3-ligated-type domain occupies 112–151 (LTHKAREGVMEFLLANHPLDCPICDQGGECDLQDQSMRYG). Residues H128, C132, C135, C141, C182, C185, C188, and C232 each coordinate [4Fe-4S] cluster. In terms of domain architecture, 4Fe-4S Mo/W bis-MGD-type spans 251-307 (LKKTESIDVLDGLGSNIRVDTRGLEVMRILPRLNDEVNEEWINDKTRFACDGLKTQR).

It belongs to the complex I 75 kDa subunit family. In terms of assembly, complex I is composed of about 40 different subunits. The cofactor is [2Fe-2S] cluster. Requires [4Fe-4S] cluster as cofactor.

Its subcellular location is the mitochondrion inner membrane. The catalysed reaction is a ubiquinone + NADH + 5 H(+)(in) = a ubiquinol + NAD(+) + 4 H(+)(out). Its function is as follows. Core subunit of the mitochondrial membrane respiratory chain NADH dehydrogenase (Complex I) that is believed to belong to the minimal assembly required for catalysis. Complex I functions in the transfer of electrons from NADH to the respiratory chain. The immediate electron acceptor for the enzyme is believed to be ubiquinone. This is the largest subunit of complex I and it is a component of the iron-sulfur (IP) fragment of the enzyme. It may form part of the active site crevice where NADH is oxidized. This is NADH-ubiquinone oxidoreductase 78 kDa subunit, mitochondrial (nuo78) from Neurospora crassa (strain ATCC 24698 / 74-OR23-1A / CBS 708.71 / DSM 1257 / FGSC 987).